Here is a 389-residue protein sequence, read N- to C-terminus: Spore coat polysaccharide biosynthesis protein SpsC (389 aa).

Position 187 is an N6-(pyridoxal phosphate)lysine (lysine 187).

The protein belongs to the DegT/DnrJ/EryC1 family. The cofactor is pyridoxal 5'-phosphate.

Its pathway is spore coat biogenesis; spore coat polysaccharide biosynthesis. The chain is Spore coat polysaccharide biosynthesis protein SpsC (spsC) from Bacillus subtilis (strain 168).